We begin with the raw amino-acid sequence, 252 residues long: Imidazole glycerol phosphate synthase subunit HisF (252 aa).

Residues aspartate 11 and aspartate 130 contribute to the active site.

It belongs to the HisA/HisF family. Heterodimer of HisH and HisF.

The protein resides in the cytoplasm. The enzyme catalyses 5-[(5-phospho-1-deoxy-D-ribulos-1-ylimino)methylamino]-1-(5-phospho-beta-D-ribosyl)imidazole-4-carboxamide + L-glutamine = D-erythro-1-(imidazol-4-yl)glycerol 3-phosphate + 5-amino-1-(5-phospho-beta-D-ribosyl)imidazole-4-carboxamide + L-glutamate + H(+). It functions in the pathway amino-acid biosynthesis; L-histidine biosynthesis; L-histidine from 5-phospho-alpha-D-ribose 1-diphosphate: step 5/9. In terms of biological role, IGPS catalyzes the conversion of PRFAR and glutamine to IGP, AICAR and glutamate. The HisF subunit catalyzes the cyclization activity that produces IGP and AICAR from PRFAR using the ammonia provided by the HisH subunit. This Azoarcus sp. (strain BH72) protein is Imidazole glycerol phosphate synthase subunit HisF.